Here is a 340-residue protein sequence, read N- to C-terminus: Probable protein phosphatase 2C 21 (340 aa).

The interval 1 to 21 (MGASPSRPLEQSPSSSEGENH) is disordered. Residues 24–305 (KYASYTTQGF…DNATAILVKF (282 aa)) form the PPM-type phosphatase domain. Mn(2+) is bound by residues Asp-58, Gly-59, Asp-254, and Asp-296. The interval 311–340 (DPDEVASARDEHQHNPEGGDEKLDINNDND) is disordered. The span at 316 to 340 (ASARDEHQHNPEGGDEKLDINNDND) shows a compositional bias: basic and acidic residues.

The protein belongs to the PP2C family. Requires Mg(2+) as cofactor. The cofactor is Mn(2+).

It catalyses the reaction O-phospho-L-seryl-[protein] + H2O = L-seryl-[protein] + phosphate. The enzyme catalyses O-phospho-L-threonyl-[protein] + H2O = L-threonyl-[protein] + phosphate. The chain is Probable protein phosphatase 2C 21 from Oryza sativa subsp. japonica (Rice).